A 126-amino-acid chain; its full sequence is Spermidine export protein MdtJ (126 aa).

4 helical membrane passes run 1–21 (MIYW…TLSM), 30–50 (ITGH…LSLA), 54–74 (VALG…ITLF), and 81–101 (EPFS…IVML).

Belongs to the drug/metabolite transporter (DMT) superfamily. Small multidrug resistance (SMR) (TC 2.A.7.1) family. MdtJ subfamily. In terms of assembly, forms a complex with MdtI.

It is found in the cell inner membrane. Catalyzes the excretion of spermidine. The sequence is that of Spermidine export protein MdtJ from Sodalis glossinidius (strain morsitans).